A 1315-amino-acid chain; its full sequence is Serine/threonine-protein kinase 36 (1315 aa).

Positions 4–254 (YHVLEMIGEG…WPDLLYHPFI (251 aa)) constitute a Protein kinase domain. Residues 10–18 (IGEGSFGRV) and lysine 33 contribute to the ATP site. Residue aspartate 125 is the Proton acceptor of the active site. Disordered stretches follow at residues 312-345 (EAMQKKHQNTGPALEQEDKTSKVAPGTAPLPRLG) and 365-405 (SWAE…RSTD). Basic and acidic residues predominate over residues 379-397 (RENRTTPDCERAFPEERPE).

It belongs to the protein kinase superfamily. Ser/Thr protein kinase family. Interacts with SPAG16 and KIF27. Mg(2+) is required as a cofactor.

The protein resides in the cytoplasm. Its subcellular location is the nucleus. It is found in the cytoskeleton. The protein localises to the cilium axoneme. It carries out the reaction L-seryl-[protein] + ATP = O-phospho-L-seryl-[protein] + ADP + H(+). It catalyses the reaction L-threonyl-[protein] + ATP = O-phospho-L-threonyl-[protein] + ADP + H(+). Serine/threonine protein kinase which plays an important role in the sonic hedgehog (Shh) pathway by regulating the activity of GLI transcription factors. Controls the activity of the transcriptional regulators GLI1, GLI2 and GLI3 by opposing the effect of SUFU and promoting their nuclear localization. GLI2 requires an additional function of STK36 to become transcriptionally active, but the enzyme does not need to possess an active kinase catalytic site for this to occur. Required for postnatal development, possibly by regulating the homeostasis of cerebral spinal fluid or ciliary function. Essential for construction of the central pair apparatus of motile cilia. The sequence is that of Serine/threonine-protein kinase 36 from Pongo abelii (Sumatran orangutan).